The primary structure comprises 79 residues: Conotoxin Cl9.4 (79 aa).

The signal sequence occupies residues 1 to 23 (MNCYLILTVALLLTSAMTGTTTA). The propeptide occupies 24-37 (GQLNKKGVTLREDD). Intrachain disulfides connect Cys41/Cys58, Cys46/Cys68, and Cys48/Cys73.

In terms of tissue distribution, expressed by the venom duct.

Its subcellular location is the secreted. This Californiconus californicus (California cone) protein is Conotoxin Cl9.4.